We begin with the raw amino-acid sequence, 157 residues long: Endoribonuclease YbeY (157 aa).

Zn(2+)-binding residues include His-114, His-118, and His-124.

The protein belongs to the endoribonuclease YbeY family. It depends on Zn(2+) as a cofactor.

It is found in the cytoplasm. Single strand-specific metallo-endoribonuclease involved in late-stage 70S ribosome quality control and in maturation of the 3' terminus of the 16S rRNA. This is Endoribonuclease YbeY from Yersinia pseudotuberculosis serotype O:3 (strain YPIII).